The following is a 162-amino-acid chain: Phosphopantetheine adenylyltransferase (162 aa).

Ser-11 is a substrate binding site. ATP contacts are provided by residues 11-12 (SF) and His-19. Lys-43, Val-76, and Arg-90 together coordinate substrate. Residues 91–93 (GLR), Glu-101, and 126–132 (LKFVSSS) each bind ATP.

It belongs to the bacterial CoaD family. As to quaternary structure, homohexamer. The cofactor is Mg(2+).

It localises to the cytoplasm. It carries out the reaction (R)-4'-phosphopantetheine + ATP + H(+) = 3'-dephospho-CoA + diphosphate. The protein operates within cofactor biosynthesis; coenzyme A biosynthesis; CoA from (R)-pantothenate: step 4/5. Reversibly transfers an adenylyl group from ATP to 4'-phosphopantetheine, yielding dephospho-CoA (dPCoA) and pyrophosphate. In Streptococcus suis (strain 05ZYH33), this protein is Phosphopantetheine adenylyltransferase.